The chain runs to 539 residues: Probable malate:quinone oxidoreductase (539 aa).

The protein belongs to the MQO family. The cofactor is FAD.

It catalyses the reaction (S)-malate + a quinone = a quinol + oxaloacetate. Its pathway is carbohydrate metabolism; tricarboxylic acid cycle; oxaloacetate from (S)-malate (quinone route): step 1/1. This Sodalis glossinidius (strain morsitans) protein is Probable malate:quinone oxidoreductase.